Reading from the N-terminus, the 448-residue chain is Protein chibby homolog 2 (448 aa).

A phosphoserine mark is found at Ser41, Ser86, Ser89, Ser97, Ser124, Ser144, Ser148, and Ser150. A coiled-coil region spans residues 164-198 (KECMLQEENKSLREENKALREENRMLSKENKILQV). Phosphoserine is present on residues Ser212 and Ser225. Residues 242-267 (KEDSTLQLLREENRALQQLLEQKQAY) are a coiled coil. Residues 270-323 (QAEDTAAPAEESKPAPSPHEEPCSPGLLQDQGSGLSSRFEEPKGPPARQEDSKE) are disordered. Basic and acidic residues-rich tracts occupy residues 279–291 (EESKPAPSPHEEP) and 307–323 (RFEEPKGPPARQEDSKE). Phosphoserine occurs at positions 335 and 338. Residues 356–414 (LQLLREMRQALQALLKENRLLQEENRTLQVLRAEHRGFQEENKALWENNKLKLQQKLVI) adopt a coiled-coil conformation.

It belongs to the chibby family. SPERT subfamily. Homodimer. Binds to NEK1. In terms of tissue distribution, testis-specific.

This Homo sapiens (Human) protein is Protein chibby homolog 2.